We begin with the raw amino-acid sequence, 380 residues long: Protein arginine N-methyltransferase PRMT10 (380 aa).

The region spanning 26–357 (EVDFANYFCT…KENHRLMDME (332 aa)) is the SAM-dependent MTase PRMT-type domain. Positions 42, 51, 75, 97, and 126 each coordinate S-adenosyl-L-methionine. Catalysis depends on residues glutamate 140 and glutamate 149. The segment at 187-227 (ENKMEDLEIAMHDWNLFVEDTESYYGVNMNVLTKAYRAEHE) is dimerization arm.

Belongs to the class I-like SAM-binding methyltransferase superfamily. Protein arginine N-methyltransferase family. In terms of assembly, ring-like homodimer.

The enzyme catalyses L-arginyl-[protein] + 2 S-adenosyl-L-methionine = N(omega),N(omega)-dimethyl-L-arginyl-[protein] + 2 S-adenosyl-L-homocysteine + 2 H(+). Functionally, methylates (mono and asymmetric dimethylation) the guanidino nitrogens of arginyl residues in some proteins. This Oryza sativa subsp. japonica (Rice) protein is Protein arginine N-methyltransferase PRMT10 (PRMT10).